Consider the following 379-residue polypeptide: Succinate--CoA ligase [ADP-forming] subunit beta (379 aa).

Positions 9–235 constitute an ATP-grasp domain; that stretch reads KEIAKNNGIP…GRELSEMEAI (227 aa). Residues Lys-45, Glu-91, Ile-94, and Glu-99 each contribute to the ATP site. 2 residues coordinate Mg(2+): Asn-191 and Asp-205. Residues Asn-255 and 312–314 contribute to the substrate site; that span reads GIT.

It belongs to the succinate/malate CoA ligase beta subunit family. Heterotetramer of two alpha and two beta subunits. Mg(2+) is required as a cofactor.

It catalyses the reaction succinate + ATP + CoA = succinyl-CoA + ADP + phosphate. It carries out the reaction GTP + succinate + CoA = succinyl-CoA + GDP + phosphate. The protein operates within carbohydrate metabolism; tricarboxylic acid cycle; succinate from succinyl-CoA (ligase route): step 1/1. Succinyl-CoA synthetase functions in the citric acid cycle (TCA), coupling the hydrolysis of succinyl-CoA to the synthesis of either ATP or GTP and thus represents the only step of substrate-level phosphorylation in the TCA. The beta subunit provides nucleotide specificity of the enzyme and binds the substrate succinate, while the binding sites for coenzyme A and phosphate are found in the alpha subunit. This is Succinate--CoA ligase [ADP-forming] subunit beta from Staphylothermus marinus (strain ATCC 43588 / DSM 3639 / JCM 9404 / F1).